We begin with the raw amino-acid sequence, 617 residues long: Isopropyl malate synthase gloH (617 aa).

The Pyruvate carboxyltransferase domain occupies 47-325 (PIWLSTDLRD…ETGLDFSDLL (279 aa)).

The protein belongs to the alpha-IPM synthase/homocitrate synthase family. LeuA type 2 subfamily.

The enzyme catalyses 3-methyl-2-oxobutanoate + acetyl-CoA + H2O = (2S)-2-isopropylmalate + CoA + H(+). The protein operates within mycotoxin biosynthesis. Functionally, 2-isopropylmalate synthase; part of the gene cluster that mediates the biosynthesis of pneumocandins, lipohexapeptides of the echinocandin family that prevent fungal cell wall formation by non-competitive inhibition of beta-1,3-glucan synthase. The 10,12-dimethylmyristoyl side chain is synthesized by the reducing polyketide synthase gloL/GLPKS4. The thioesterase gloN/GLHYD exclusively interacts with gloL/GLPKS4 to maintain turnover of the polyketide side chain. The 10R,12S-dimethylmyristic acid is then transferred to the first thiolation domain of the nonribosomal peptide synthetase gloA/GLNRPS4 by the acyl-AMP ligase gloD/GLligase, followed by its acylation to L-ornithine to trigger elongation of the cyclic hexapeptide. L-ornithine, 4R-hydroxyl-L-proline (generated from L-proline by the dioxygenase gloF/GLOXY2), 3S-hydroxyl-L-homotyrosine (generated by gloG/GLHtyB, gloH/GLHtyA, gloI/GLHtyC, gloJ/GLHtyD and hydroxylated at C-3 by the dioxygenase gloM/GLOXY1), 3R-hydroxyl-L-glutamine (generated from L-glutamine probably by the dioxygenase gloE/GLOXY3) and 3S-hydroxyl-L-proline (generated from L-proline by the dioxygenase gloF/GLOXY2 to yield pneumocandin B0), or 3S-hydroxyl-4S-methyl-L-proline (generated from L-leucine by the dioxygenase gloC/GLOXY4 to yield pneumocandin A0) are sequentially added to the growing chain. The last C domain of gloA/GLNRPS4 is proposed to be responsible for cyclization by condensation to form the peptide bond between L-ornithine and 3S-hydroxyl-4S-methyl-L-proline (for pneumocandin A0) or 3S-hydroxyl-L-proline (for pneumocandin B0). Finally, the subsequent C-4 hydroxylation of 3S-hydroxyl-L-homotyrosine and L-ornithine dihydroxylation at C-4 and C-5 are performed by the cytochrome P450 monooxygenases gloP/GLP450-1 and gloO/GLP450-2, respectively. This is Isopropyl malate synthase gloH from Glarea lozoyensis (strain ATCC 20868 / MF5171).